The primary structure comprises 117 residues: Small ribosomal subunit protein bS18c (117 aa).

The tract at residues 86-117 (SELTPRTNALKARNKNKQNKYQNNQTKFLSNF) is disordered.

This sequence belongs to the bacterial ribosomal protein bS18 family. As to quaternary structure, part of the 30S ribosomal subunit.

The protein localises to the plastid. This chain is Small ribosomal subunit protein bS18c, found in Cuscuta exaltata (Tall dodder).